Reading from the N-terminus, the 114-residue chain is Protein ELF4-LIKE 4 (114 aa).

The disordered stretch occupies residues S87 to G114. A compositionally biased stretch (polar residues) spans D89–L100.

This sequence belongs to the EARLY FLOWERING 4 family. In terms of assembly, homodimer.

The protein localises to the nucleus. In terms of biological role, component of the central CCA1/LHY-TOC1 feedback loop in the circadian clock that promotes clock accuracy and is required for sustained rhythms in the absence of daily light/dark cycles. The chain is Protein ELF4-LIKE 4 (EFL4) from Arabidopsis thaliana (Mouse-ear cress).